The following is a 578-amino-acid chain: MPKIKRLPDEVIKKIAAGEVVERPYSVVKELVENSLDAKAQNINVYIEEGGLGKIVVEDDGIGIPPEELPDALLRHTTSKIASFDDLYYLESFGFRGEALYSIAAVSKISIKSRVRGENNGYELIAHAGEVINLTEVGMAYGTVVTVSDLFFNTPARKKFLKSGQTEAGLIRQFIEKMAILYPGVKFSLFIDGKKIYSSAGIQEQLGLLARFWGLEKGNLLMLEEKLGEGFFIKGGIALPPAGKPHRKLQVFAVNKRLVKSGILTKAIDDAYESLLPTGLKPLVFLEVVVPGTWVDVNVHPQKLEVKFMDEQKIYLDVRTIIRNKLVNAKSSSLKSFSPARETNTKSEDNDYWQVTYFAEEFSGNSDKLLEKEDIFSTSDNLTFSLNKDFAKELNFQVIGQFSLKYIIVEKNDKLLIIDQHAAHERILYEKYQTKLNPFYSQVLTFPVRIKASPELEAFLQENYQNFLEIGLHIEPFGPGEYLVREIPEDFPQNNIANVLEEYLYEIMEQKEQVSFREKALKLFACKNAVKFGEKLTYSEMTNLVKELFKTNYPLSCPHGRPTIYELSLTEINKKFFR.

The protein belongs to the DNA mismatch repair MutL/HexB family.

Functionally, this protein is involved in the repair of mismatches in DNA. It is required for dam-dependent methyl-directed DNA mismatch repair. May act as a 'molecular matchmaker', a protein that promotes the formation of a stable complex between two or more DNA-binding proteins in an ATP-dependent manner without itself being part of a final effector complex. This Carboxydothermus hydrogenoformans (strain ATCC BAA-161 / DSM 6008 / Z-2901) protein is DNA mismatch repair protein MutL.